Consider the following 583-residue polypeptide: Protein translocase subunit SecD (583 aa).

Transmembrane regions (helical) follow at residues 7-27, 419-439, 446-468, 469-489, 511-531, and 538-558; these read FGVV…TLQW, LVWG…EAGV, LLNL…LSSI, AGMI…FERI, FWAI…LSVL, and GFAY…LFVS.

It belongs to the SecD/SecF family. SecD subfamily. Forms a complex with SecF. Part of the essential Sec protein translocation apparatus which comprises SecA, SecYEG and auxiliary proteins SecDF. Other proteins may also be involved.

The protein localises to the cell inner membrane. Its function is as follows. Part of the Sec protein translocase complex. Interacts with the SecYEG preprotein conducting channel. SecDF uses the proton motive force (PMF) to complete protein translocation after the ATP-dependent function of SecA. The chain is Protein translocase subunit SecD from Treponema pallidum (strain Nichols).